Here is a 364-residue protein sequence, read N- to C-terminus: Aminomethyltransferase (364 aa).

Belongs to the GcvT family. In terms of assembly, the glycine cleavage system is composed of four proteins: P, T, L and H.

The enzyme catalyses N(6)-[(R)-S(8)-aminomethyldihydrolipoyl]-L-lysyl-[protein] + (6S)-5,6,7,8-tetrahydrofolate = N(6)-[(R)-dihydrolipoyl]-L-lysyl-[protein] + (6R)-5,10-methylene-5,6,7,8-tetrahydrofolate + NH4(+). The glycine cleavage system catalyzes the degradation of glycine. In Shewanella oneidensis (strain ATCC 700550 / JCM 31522 / CIP 106686 / LMG 19005 / NCIMB 14063 / MR-1), this protein is Aminomethyltransferase.